The primary structure comprises 217 residues: Ribonuclease HII (217 aa).

One can recognise an RNase H type-2 domain in the interval 27 to 216; sequence SRIAGVDEAG…VKESIREGIC (190 aa). Residues Asp33, Glu34, and Asp126 each coordinate a divalent metal cation.

This sequence belongs to the RNase HII family. The cofactor is Mn(2+). Mg(2+) is required as a cofactor.

It is found in the cytoplasm. The enzyme catalyses Endonucleolytic cleavage to 5'-phosphomonoester.. Its function is as follows. Endonuclease that specifically degrades the RNA of RNA-DNA hybrids. The polypeptide is Ribonuclease HII (rnhB) (Chlamydia muridarum (strain MoPn / Nigg)).